The sequence spans 73 residues: DNA-directed RNA polymerase subunit omega (73 aa).

It belongs to the RNA polymerase subunit omega family. The RNAP catalytic core consists of 2 alpha, 1 beta, 1 beta' and 1 omega subunit. When a sigma factor is associated with the core the holoenzyme is formed, which can initiate transcription.

It carries out the reaction RNA(n) + a ribonucleoside 5'-triphosphate = RNA(n+1) + diphosphate. Its function is as follows. Promotes RNA polymerase assembly. Latches the N- and C-terminal regions of the beta' subunit thereby facilitating its interaction with the beta and alpha subunits. The chain is DNA-directed RNA polymerase subunit omega from Maridesulfovibrio salexigens (strain ATCC 14822 / DSM 2638 / NCIMB 8403 / VKM B-1763) (Desulfovibrio salexigens).